The chain runs to 137 residues: MGVRKRETADARKEANKSIAFAKLNNCPTSPRKMRLVADLVRGQKVERALNILRFSSKEASRKLEKLLLSAINNWEQKNSEGNLEEAGLFVKEIRVDGGMMLKRLRPAPQGRAHRIRKRSNHVTIVLGAINNTQSNS.

It belongs to the universal ribosomal protein uL22 family. As to quaternary structure, part of the 50S ribosomal subunit.

Functionally, this protein binds specifically to 23S rRNA; its binding is stimulated by other ribosomal proteins, e.g. L4, L17, and L20. It is important during the early stages of 50S assembly. It makes multiple contacts with different domains of the 23S rRNA in the assembled 50S subunit and ribosome. Its function is as follows. The globular domain of the protein is located near the polypeptide exit tunnel on the outside of the subunit, while an extended beta-hairpin is found that lines the wall of the exit tunnel in the center of the 70S ribosome. This is Large ribosomal subunit protein uL22 from Flavobacterium johnsoniae (strain ATCC 17061 / DSM 2064 / JCM 8514 / BCRC 14874 / CCUG 350202 / NBRC 14942 / NCIMB 11054 / UW101) (Cytophaga johnsonae).